The chain runs to 92 residues: N(2)-fixation sustaining protein CowN (92 aa).

This sequence belongs to the CowN family.

Functionally, is required to sustain N(2)-dependent growth in the presence of low levels of carbon monoxide (CO). Probably acts by protecting the N(2) fixation ability of the nitrogenase complex, which is inactivated in the presence of CO. The sequence is that of N(2)-fixation sustaining protein CowN from Rhodobacter capsulatus (strain ATCC BAA-309 / NBRC 16581 / SB1003).